We begin with the raw amino-acid sequence, 155 residues long: Transcriptional regulator MraZ (155 aa).

SpoVT-AbrB domains are found at residues 5 to 52 (TYEN…SQDR) and 81 to 124 (SMNL…EPAA).

The protein belongs to the MraZ family. Forms oligomers.

The protein localises to the cytoplasm. The protein resides in the nucleoid. The polypeptide is Transcriptional regulator MraZ (Pelagibacter ubique (strain HTCC1062)).